The following is a 357-amino-acid chain: Gas vesicle ATPase GvpN (357 aa).

Residues 22–36 (ATSASKNGGRTTPSA) are compositionally biased toward polar residues. The disordered stretch occupies residues 22-43 (ATSASKNGGRTTPSALTPRPRS). 72–79 (GPAGTGKT) provides a ligand contact to ATP.

This sequence belongs to the CbbQ/NirQ/NorQ/GpvN family. As to quaternary structure, forms homodimers, probably interacts with other GV proteins including GvpA.

It localises to the gas vesicle. The protein resides in the cytoplasm. It catalyses the reaction ATP + H2O = ADP + phosphate + H(+). An ATPase that functions in gas vesicle formation. A minor component of the gas vesicle, also found in soluble extracts. Gas vesicles (GV) are hollow, gas filled proteinaceous nanostructures. During planktonic growth they allow positioning of the organism at a favorable depth for light or nutrient acquisition. The chain is Gas vesicle ATPase GvpN from Ancylobacter aquaticus.